The sequence spans 551 residues: Terpene synthase 10 (551 aa).

Residues Asp303, Asp307, and Glu455 each contribute to the Mg(2+) site. The DDXXD motif signature appears at 303–307; it reads DDIYD.

It belongs to the terpene synthase family. Requires Mg(2+) as cofactor.

In terms of biological role, catalyzes the cyclization of farnesyl diphosphate to sesquiterpene olefins. The polypeptide is Terpene synthase 10 (TPS10) (Ricinus communis (Castor bean)).